The following is a 517-amino-acid chain: Protein AGENET DOMAIN (AGD)-CONTAINING P1 (517 aa).

The disordered stretch occupies residues 1–35; the sequence is MLRPRRSLGVSSPAKQRKKAAPKNSMATRANRKRL. 2 plant Agenet, chromatin-binding regions span residues 37–111 and 117–173; these read SYLK…PPMS and KKIV…EWVD. Residues 177–202 form a disordered region; sequence KPPLEETEEEEDESEEDKLDDSEDEE. A compositionally biased stretch (acidic residues) spans 181–202; sequence EETEEEEDESEEDKLDDSEDEE. Plant Agenet, chromatin-binding stretches follow at residues 219–287, 289–345, 378–446, and 449–505; these read QMFS…PRDE, IDFA…DWVD, QAFS…LESV, and SPFE…EWID.

In terms of tissue distribution, expressed ubiquitously during vegetative stage, in meristems (e.g. root tips and shoot apical meristem), and in ovules and young seeds during reproductive stage.

It localises to the nucleus. Heterochromatin-binding protein that preferentially occupies long transposons and specifically recognizes the histone H3 'Lys-9' methylation (H3K9me) marks, with a stronger affinity for dimethylated H3K9 (H3K9me2). Required for transcriptional silencing, non-CG DNA methylation (e.g. CHG and CHH regions), and H3K9 dimethylation (H3K9me2) at some loci. Mediates heterochromatin phase separation and chromocenter formation. The protein is Protein AGENET DOMAIN (AGD)-CONTAINING P1 of Arabidopsis thaliana (Mouse-ear cress).